Reading from the N-terminus, the 315-residue chain is Methionyl-tRNA formyltransferase (315 aa).

Residue 113–116 participates in (6S)-5,6,7,8-tetrahydrofolate binding; it reads SLLP.

This sequence belongs to the Fmt family.

It carries out the reaction L-methionyl-tRNA(fMet) + (6R)-10-formyltetrahydrofolate = N-formyl-L-methionyl-tRNA(fMet) + (6S)-5,6,7,8-tetrahydrofolate + H(+). Its function is as follows. Attaches a formyl group to the free amino group of methionyl-tRNA(fMet). The formyl group appears to play a dual role in the initiator identity of N-formylmethionyl-tRNA by promoting its recognition by IF2 and preventing the misappropriation of this tRNA by the elongation apparatus. This Shigella flexneri serotype 5b (strain 8401) protein is Methionyl-tRNA formyltransferase.